We begin with the raw amino-acid sequence, 436 residues long: MMATQTLSIDSYQDGQQMQVVTELKTEQDPNCSDPDAEGVSPPPIESQTPMDADKQAIYRHPLFPLLALLFEKCEQSTQGSEGTTSASFDVDIENFVRKQEKDGKPFFCEDPETDNLMVKAIQVLRIHLLELEKVNELCKDFCSRYIACLKTKMNSETLLSGEPGSPYSPVQSQQIQSAITGTLSPQGIVVPASALQQGNVTMATVAGGTVYQPVTVVTPQGQVVTQALSPGTIRIQNSQLQLQLNQDLSILHQEDGSSKNKRGVLPKHATNVMRSWLFQHIGHPYPTEDEKKQIAAQTNLTLLQVNNWFINARRRILQPMLDSSCSETPKTKKKPAQNRPVQRFWPDSLASGVAQATPSELAMSEGAVVTITTPVNMNVDSLQSLSSDGATLAVQQVMMAGQSEDESVDSTEDEGGALAPTHISGLVLENSDSLQ.

A disordered region spans residues 23–50 (ELKTEQDPNCSDPDAEGVSPPPIESQTP). Phosphoserine occurs at positions 33 and 41. Positions 80-163 (GSEGTTSASF…MNSETLLSGE (84 aa)) constitute an MEIS N-terminal domain. A DNA-binding region (homeobox; TALE-type) is located at residues 259–321 (SKNKRGVLPK…NARRRILQPM (63 aa)). Residues 401-436 (AGQSEDESVDSTEDEGGALAPTHISGLVLENSDSLQ) form a disordered region. The span at 404 to 416 (SEDESVDSTEDEG) shows a compositional bias: acidic residues.

The protein belongs to the TALE/MEIS homeobox family. In terms of assembly, interacts with MN1.

It is found in the nucleus. In terms of biological role, activates transcription in the presence of PBX1A and HOXA1. Its function is as follows. (Microbial infection) In complex with PBX1, binds to the 5'-TGATTGAC-3' consensus sequence in the U5 region of Moloney murine leukemia virus and promotes viral transcription. This Mus musculus (Mouse) protein is Homeobox protein PKNOX1.